The sequence spans 282 residues: Chlorite dismutase (282 aa).

Positions Met-1–Ala-31 are cleaved as a signal peptide. Glu-104 contributes to the Ca(2+) binding site. His-204 contacts heme. Arg-217 functions as the Proton acceptor in the catalytic mechanism. Residues Asp-226 and Thr-265 each contribute to the Ca(2+) site.

The protein belongs to the chlorite dismutase family. As to quaternary structure, homopentamer. The cofactor is heme b.

The protein resides in the periplasm. It catalyses the reaction chloride + O2 = chlorite. Catalyzes the heme-dependent decomposition of chlorite to O(2) and chloride with high efficiency and specificity. Used to detoxify chlorite, a by-product of the reduction of perchlorate, a primarily anthropogenic pollutant, in perchlorate-respiring bacteria. In Dechloromonas aromatica (strain RCB), this protein is Chlorite dismutase.